Reading from the N-terminus, the 476-residue chain is Cysteine--tRNA ligase (476 aa).

A Zn(2+)-binding site is contributed by C28. Positions 30-40 (PTVYDNTHLGH) match the 'HIGH' region motif. Zn(2+) is bound by residues C208, H233, and E237. The 'KMSKS' region motif lies at 265-269 (KMSKS). K268 serves as a coordination point for ATP.

The protein belongs to the class-I aminoacyl-tRNA synthetase family. It depends on Zn(2+) as a cofactor.

It localises to the cytoplasm. It carries out the reaction tRNA(Cys) + L-cysteine + ATP = L-cysteinyl-tRNA(Cys) + AMP + diphosphate. The protein is Cysteine--tRNA ligase of Methanococcus maripaludis (strain DSM 14266 / JCM 13030 / NBRC 101832 / S2 / LL).